A 139-amino-acid chain; its full sequence is D-ribose pyranase (139 aa).

His-20 (proton donor) is an active-site residue. Residues Asp-28, His-106, and 128-130 (YAN) each bind substrate.

This sequence belongs to the RbsD / FucU family. RbsD subfamily. In terms of assembly, homodecamer.

The protein localises to the cytoplasm. It carries out the reaction beta-D-ribopyranose = beta-D-ribofuranose. It participates in carbohydrate metabolism; D-ribose degradation; D-ribose 5-phosphate from beta-D-ribopyranose: step 1/2. Functionally, catalyzes the interconversion of beta-pyran and beta-furan forms of D-ribose. This chain is D-ribose pyranase, found in Actinobacillus succinogenes (strain ATCC 55618 / DSM 22257 / CCUG 43843 / 130Z).